The chain runs to 275 residues: Probable ABC transporter permease protein PH1216 (275 aa).

A run of 6 helical transmembrane segments spans residues Leu10–Ile30, Ile73–Ile93, Leu105–Val125, Ile137–Thr157, Ile181–Thr203, and Ile241–Gly261. The region spanning Ile68–Leu260 is the ABC transmembrane type-1 domain.

It belongs to the binding-protein-dependent transport system permease family. MalFG subfamily.

Its subcellular location is the cell membrane. Probably part of a binding-protein-dependent transport system PH1214/15/16. Probably responsible for the translocation of the substrate across the membrane. This chain is Probable ABC transporter permease protein PH1216, found in Pyrococcus horikoshii (strain ATCC 700860 / DSM 12428 / JCM 9974 / NBRC 100139 / OT-3).